We begin with the raw amino-acid sequence, 327 residues long: Homeotic protein distal-less (327 aa).

Residues 124–183 (MRKPRTIYSSLQLQQLNRRFQRTQYLALPERAELAASLGLTQTQVKIWFQNRRSKYKKMM) constitute a DNA-binding region (homeobox). The tract at residues 181 to 303 (KMMKAAQGPG…THHHNPPPQM (123 aa)) is disordered. The span at 231 to 249 (LPPGHSPTPSSTPVSELSP) shows a compositional bias: low complexity. The span at 266–275 (QKPHWIDHKP) shows a compositional bias: basic and acidic residues. Positions 276 to 286 (PPQMTPQPPHP) are enriched in pro residues.

As to expression, expressed in the embryo in limb primordia of the head and thoracic segments. Expressed in regions of the larval leg, wing, antennal and haltere disks that form the distal-most regions of the mature structures (in the leg this corresponds to the tarsus and the distal tibia). Found in the optic center of the developing larval brain.

The protein localises to the nucleus. Its function is as follows. Transcription factor that plays a role in larval and adult appendage development. Specifies the identity of ventral appendages (including legs and antennae) and suppresses dorsal appendage development. Involved in patterning the distal-proximal limb axis. May control the adhesive properties of cells during limb morphogenesis. Also has a secondary role in the normal patterning of the wing margin. The polypeptide is Homeotic protein distal-less (Dll) (Drosophila melanogaster (Fruit fly)).